A 150-amino-acid polypeptide reads, in one-letter code: UPF0178 protein BamMC406_1579 (150 aa).

The protein belongs to the UPF0178 family.

This is UPF0178 protein BamMC406_1579 from Burkholderia ambifaria (strain MC40-6).